A 329-amino-acid polypeptide reads, in one-letter code: tRNA N6-adenosine threonylcarbamoyltransferase (329 aa).

Positions 110 and 114 each coordinate Fe cation. Substrate contacts are provided by residues 132–136, D165, G178, and N271; that span reads VISGG. D299 serves as a coordination point for Fe cation.

Belongs to the KAE1 / TsaD family. It depends on Fe(2+) as a cofactor.

It is found in the cytoplasm. It catalyses the reaction L-threonylcarbamoyladenylate + adenosine(37) in tRNA = N(6)-L-threonylcarbamoyladenosine(37) in tRNA + AMP + H(+). In terms of biological role, required for the formation of a threonylcarbamoyl group on adenosine at position 37 (t(6)A37) in tRNAs that read codons beginning with adenine. Is involved in the transfer of the threonylcarbamoyl moiety of threonylcarbamoyl-AMP (TC-AMP) to the N6 group of A37, together with TsaE and TsaB. TsaD likely plays a direct catalytic role in this reaction. In Neorickettsia sennetsu (strain ATCC VR-367 / Miyayama) (Ehrlichia sennetsu), this protein is tRNA N6-adenosine threonylcarbamoyltransferase.